Reading from the N-terminus, the 277-residue chain is MGLLECCARCLVGAPFASLVATGLCFFGVALFCGCGHEALTGTEKLIETYFSKNYQDYEYLINVIHAFQYVIYGTASFFFLYGALLLAEGFYTTGAVRQIFGDYKTTICGKGLSATVTGGQKGRGSRGQHQAHSLERVCHCLGKWLGHPDKFVGITYALTVVWLLVFACSAVPVYIYFNTWTTCQSIAFPSKTSASIGSLCADARMYGVLPWNAFPGKVCGSNLLSICKTAEFQMTFHLFIAAFVGAAATLVSLLTFMIAATYNFAVLKLMGRGTKF.

The Cytoplasmic portion of the chain corresponds to 2-9 (GLLECCAR). S-palmitoyl cysteine attachment occurs at residues Cys6, Cys7, and Cys10. A helical transmembrane segment spans residues 10 to 36 (CLVGAPFASLVATGLCFFGVALFCGCG). Topologically, residues 37–63 (HEALTGTEKLIETYFSKNYQDYEYLIN) are extracellular. Residues 64 to 88 (VIHAFQYVIYGTASFFFLYGALLLA) form a helical membrane-spanning segment. Residues 89–151 (EGFYTTGAVR…LGKWLGHPDK (63 aa)) lie on the Cytoplasmic side of the membrane. The S-palmitoyl cysteine moiety is linked to residue Cys109. Position 114 is a phosphoserine (Ser114). Thr116 and Thr118 each carry phosphothreonine. S-palmitoyl cysteine attachment occurs at residues Cys139 and Cys141. The helical transmembrane segment at 152–177 (FVGITYALTVVWLLVFACSAVPVYIY) threads the bilayer. Residues 178–233 (FNTWTTCQSIAFPSKTSASIGSLCADARMYGVLPWNAFPGKVCGSNLLSICKTAEF) lie on the Extracellular side of the membrane. 2 disulfide bridges follow: Cys184-Cys228 and Cys201-Cys220. The O-palmitoyl serine moiety is linked to residue Ser199. A helical transmembrane segment spans residues 234–260 (QMTFHLFIAAFVGAAATLVSLLTFMIA). Residues 261 to 277 (ATYNFAVLKLMGRGTKF) lie on the Cytoplasmic side of the membrane.

The protein belongs to the myelin proteolipid protein family. Interacts with MAL.

The protein localises to the cell membrane. Its subcellular location is the myelin membrane. Functionally, this is the major myelin protein from the central nervous system. It plays an important role in the formation or maintenance of the multilamellar structure of myelin. This chain is Myelin proteolipid protein (Plp1), found in Mus musculus (Mouse).